The following is a 246-amino-acid chain: Eukaryotic translation initiation factor 6 (246 aa).

Residues S174 and S175 each carry the phosphoserine; by CK1 modification.

It belongs to the eIF-6 family. As to quaternary structure, monomer. Associates with the 60S ribosomal subunit. In terms of processing, phosphorylation at Ser-174 and Ser-175 promotes nuclear export.

It localises to the cytoplasm. The protein localises to the nucleus. It is found in the nucleolus. Functionally, binds to the 60S ribosomal subunit and prevents its association with the 40S ribosomal subunit to form the 80S initiation complex in the cytoplasm. Is also involved in ribosome biogenesis. Associates with pre-60S subunits in the nucleus and is involved in its nuclear export. The sequence is that of Eukaryotic translation initiation factor 6 (tif-6) from Neurospora crassa (strain ATCC 24698 / 74-OR23-1A / CBS 708.71 / DSM 1257 / FGSC 987).